We begin with the raw amino-acid sequence, 106 residues long: Large ribosomal subunit protein eL42 (106 aa).

Positions 34–53 are disordered; the sequence is YAQGKRRYDRKQSGYGGQTK.

Belongs to the eukaryotic ribosomal protein eL42 family. As to quaternary structure, component of the large ribosomal subunit.

It is found in the cytoplasm. Component of the large ribosomal subunit. The ribosome is a large ribonucleoprotein complex responsible for the synthesis of proteins in the cell. The sequence is that of Large ribosomal subunit protein eL42 (Rpl36a) from Canis lupus familiaris (Dog).